A 360-amino-acid chain; its full sequence is Phospho-N-acetylmuramoyl-pentapeptide-transferase (360 aa).

10 consecutive transmembrane segments (helical) span residues 27-47 (GALI…ISSL), 70-90 (GTPT…SILW), 93-113 (LSSV…AIGF), 134-154 (LALE…AGQE), 168-188 (LLLN…VGAG), 205-225 (VMVA…AIFA), 239-259 (LSVI…FNAP), 262-282 (AIFM…TVAV), 288-308 (IVLA…IIQV), and 337-357 (QVVI…LSTL).

This sequence belongs to the glycosyltransferase 4 family. MraY subfamily. Requires Mg(2+) as cofactor.

The protein resides in the cell inner membrane. The catalysed reaction is UDP-N-acetyl-alpha-D-muramoyl-L-alanyl-gamma-D-glutamyl-meso-2,6-diaminopimeloyl-D-alanyl-D-alanine + di-trans,octa-cis-undecaprenyl phosphate = di-trans,octa-cis-undecaprenyl diphospho-N-acetyl-alpha-D-muramoyl-L-alanyl-D-glutamyl-meso-2,6-diaminopimeloyl-D-alanyl-D-alanine + UMP. It functions in the pathway cell wall biogenesis; peptidoglycan biosynthesis. In terms of biological role, catalyzes the initial step of the lipid cycle reactions in the biosynthesis of the cell wall peptidoglycan: transfers peptidoglycan precursor phospho-MurNAc-pentapeptide from UDP-MurNAc-pentapeptide onto the lipid carrier undecaprenyl phosphate, yielding undecaprenyl-pyrophosphoryl-MurNAc-pentapeptide, known as lipid I. The protein is Phospho-N-acetylmuramoyl-pentapeptide-transferase of Chelativorans sp. (strain BNC1).